The following is a 128-amino-acid chain: L-ectoine synthase (128 aa).

The protein belongs to the ectoine synthase family.

It catalyses the reaction (2S)-4-acetamido-2-aminobutanoate = L-ectoine + H2O. The protein operates within amine and polyamine biosynthesis; ectoine biosynthesis; L-ectoine from L-aspartate 4-semialdehyde: step 3/3. In terms of biological role, catalyzes the circularization of gamma-N-acetyl-alpha,gamma-diaminobutyric acid (ADABA) to ectoine (1,4,5,6-tetrahydro-2-methyl-4-pyrimidine carboxylic acid), which is an excellent osmoprotectant. The chain is L-ectoine synthase from Vibrio atlanticus (strain LGP32) (Vibrio splendidus (strain Mel32)).